The following is a 468-amino-acid chain: UDP-N-acetylmuramate--L-alanine ligase (468 aa).

114–120 (GTHGKTT) contributes to the ATP binding site.

The protein belongs to the MurCDEF family.

It localises to the cytoplasm. It carries out the reaction UDP-N-acetyl-alpha-D-muramate + L-alanine + ATP = UDP-N-acetyl-alpha-D-muramoyl-L-alanine + ADP + phosphate + H(+). It participates in cell wall biogenesis; peptidoglycan biosynthesis. In terms of biological role, cell wall formation. This is UDP-N-acetylmuramate--L-alanine ligase from Methylobacterium radiotolerans (strain ATCC 27329 / DSM 1819 / JCM 2831 / NBRC 15690 / NCIMB 10815 / 0-1).